A 214-amino-acid polypeptide reads, in one-letter code: Adenylate kinase (214 aa).

Position 10–15 (10–15 (GAGKGT)) interacts with ATP. Positions 30–59 (STGDMLRAAVKAGTPLGLEAKKVMDAGQLV) are NMP. Residues threonine 31, arginine 36, 57–59 (QLV), 85–88 (GFPR), and glutamine 92 contribute to the AMP site. The LID stretch occupies residues 122-159 (GRRVHSGSGRVYHVVFNPPKVEGKDDVTGEDLSIRPDD). Residues arginine 123 and 132–133 (VY) contribute to the ATP site. Residues arginine 156 and arginine 167 each contribute to the AMP site. An ATP-binding site is contributed by glutamine 200.

The protein belongs to the adenylate kinase family. Monomer.

It localises to the cytoplasm. The enzyme catalyses AMP + ATP = 2 ADP. It participates in purine metabolism; AMP biosynthesis via salvage pathway; AMP from ADP: step 1/1. Functionally, catalyzes the reversible transfer of the terminal phosphate group between ATP and AMP. Plays an important role in cellular energy homeostasis and in adenine nucleotide metabolism. The chain is Adenylate kinase from Shewanella frigidimarina (strain NCIMB 400).